The sequence spans 27 residues: Chitinase 47 kDa (27 aa).

The GH18 domain occupies 3-27 (SKVVGYFTEWGTYDRKYYVKNIEXS).

The protein belongs to the glycosyl hydrolase 18 family. Chitinase class II subfamily. As to quaternary structure, homodimer.

The catalysed reaction is Random endo-hydrolysis of N-acetyl-beta-D-glucosaminide (1-&gt;4)-beta-linkages in chitin and chitodextrins.. Its function is as follows. Able to cleave chitin oligomers from N=3 to 6. This chain is Chitinase 47 kDa, found in Streptomyces olivaceoviridis (Streptomyces corchorusii).